A 913-amino-acid chain; its full sequence is MGCPAVEARRWGDMWLVVAFCLLGHGHAAVTKEEKAHLRSQVLEMFDHAYGNYMQHAYPADELMPLTCRGRIRGQEPSRGDVDDALGKFSLTLIDTLDTLVVLNKTKEFEDAVRKVITDVNLDNDIVVSVFETNIRVLGGLLGGHSVAIMLKENGDGMQWYNDELLHMAKELGYKLLPAFNTTSGLPYPRINLKFGIRRPEARTGTETDTCTACAGTMILEFAALSRFTGISVFEEHARKALDFLWDKRQRSSNLVGVTINIHTGDWVRKDSGVGAGIDSYYEYLLKAYVLLGDDSYLERFNTHYDAIMRYISQPPLLLDVHIHKPMLTARTWMDSLLAFFPGLQVLKGDIRPAIETHEMLYQVIKKHNFLPEAFTTDFRVHWAQHPLRPEFAESTYFLYKATGDPYYLEVGKTLIDNLNKYARVPCGFAAVKDVRTGSHEDRMDSFFLAEMFKYLYLLFSEREDLIFDIEDYIFTTEAHLLPLSLSTANPSSTKKNTTTQYTELDDSNFDWSCPNTQILFRNDPMYAQNIREPLKNVVDKNCPRSPSRLDEISGSGKMPPLRARDFMASNSEHLEILKKMGVSLIHLKDGRVQLVQHANQAASSIDAEDGLRFMQEMIELSSQQQKEQQLPPRAVQIVSHPFYGRVVLTAGPAQFGMDLSKHLAGAQGLVARAEPYSGCSDITNGQAIQGKIALMQRGQCMFAEKARNVQKAGAIGGIVIDDNEGSSSDTAPLFQMAGDGKSTDDVTIPMLFLFSKEGNIILDAIREYQQVEVLLSDKAKDRDLESESGEQKPVENDSQKQALEDLFMTPEEIAELLIVHEEESPVSQPEVPSSDSPSGGDRTSERDITPESQEHKTEETEHSPKDNVQTPPENSEDSTEEKMDNKVQPMESILADWKEDIEAFEMMEKDEL.

The N-terminal stretch at 1–15 is a signal peptide; sequence MGCPAVEARRWGDMW. An N-linked (GlcNAc...) asparagine glycan is attached at asparagine 104. Residue glutamate 132 is the Proton donor of the active site. N-linked (GlcNAc...) asparagine glycosylation occurs at asparagine 181. The active site involves aspartate 279. Glutamate 373 acts as the Proton donor in catalysis. Glutamate 391 is a catalytic residue. Threonine 477 contacts Ca(2+). N-linked (GlcNAc...) asparagine glycosylation is present at asparagine 497. Positions 660–766 constitute a PA domain; that stretch reads LSKHLAGAQG…KEGNIILDAI (107 aa). N-linked (GlcNAc...) asparagine glycosylation is present at asparagine 797. Positions 823–895 are disordered; sequence EESPVSQPEV…NKVQPMESIL (73 aa). Residues 826 to 839 show a composition bias toward low complexity; it reads PVSQPEVPSSDSPS. Basic and acidic residues predominate over residues 843 to 866; it reads RTSERDITPESQEHKTEETEHSPK. A Prevents secretion from ER motif is present at residues 910–913; the sequence is KDEL.

It belongs to the glycosyl hydrolase 47 family. Ca(2+) is required as a cofactor.

It is found in the endoplasmic reticulum lumen. It catalyses the reaction N(4)-(alpha-D-Man-(1-&gt;2)-alpha-D-Man-(1-&gt;2)-alpha-D-Man-(1-&gt;3)-[alpha-D-Man-(1-&gt;2)-alpha-D-Man-(1-&gt;3)-[alpha-D-Man-(1-&gt;2)-alpha-D-Man-(1-&gt;6)]-alpha-D-Man-(1-&gt;6)]-beta-D-Man-(1-&gt;4)-beta-D-GlcNAc-(1-&gt;4)-beta-D-GlcNAc)-L-asparaginyl-[protein] (N-glucan mannose isomer 9A1,2,3B1,2,3) + 4 H2O = N(4)-(alpha-D-Man-(1-&gt;3)-[alpha-D-Man-(1-&gt;3)-[alpha-D-Man-(1-&gt;6)]-alpha-D-Man-(1-&gt;6)]-beta-D-Man-(1-&gt;4)-beta-D-GlcNAc-(1-&gt;4)-beta-D-GlcNAc)-L-asparaginyl-[protein] (N-glucan mannose isomer 5A1,2) + 4 beta-D-mannose. The enzyme catalyses N(4)-(alpha-D-Man-(1-&gt;2)-alpha-D-Man-(1-&gt;2)-alpha-D-Man-(1-&gt;3)-[alpha-D-Man-(1-&gt;3)-[alpha-D-Man-(1-&gt;2)-alpha-D-Man-(1-&gt;6)]-alpha-D-Man-(1-&gt;6)]-beta-D-Man-(1-&gt;4)-beta-D-GlcNAc-(1-&gt;4)-beta-D-GlcNAc)-L-asparaginyl-[protein] (N-glucan mannose isomer 8A1,2,3B1,3) + 3 H2O = N(4)-(alpha-D-Man-(1-&gt;3)-[alpha-D-Man-(1-&gt;3)-[alpha-D-Man-(1-&gt;6)]-alpha-D-Man-(1-&gt;6)]-beta-D-Man-(1-&gt;4)-beta-D-GlcNAc-(1-&gt;4)-beta-D-GlcNAc)-L-asparaginyl-[protein] (N-glucan mannose isomer 5A1,2) + 3 beta-D-mannose. It functions in the pathway protein modification; protein glycosylation. Its function is as follows. May be involved in endoplasmic reticulum-associated degradation (ERAD). The chain is ER degradation-enhancing alpha-mannosidase-like protein 3 (edem3) from Xenopus laevis (African clawed frog).